Consider the following 409-residue polypeptide: MARQKFERTKPHINIGTIGHVDHGKTTLTAAITMALAATGNSKAKRYEDIDSAPEEKARGITINTAHVEYETKNRHYAHVDCPGHADYVKNMITGAAQMDGAILVVSAADGPMPQTKEHILLAKQVGVPNIVVFLNKEDQVDDSELLELVELEIRETLSNYEFPGDDIPVIPGSALLSVEALTKNPKITKGENKWVDKILNLMDQVDSYIPTPTRDTEKDFLMAIEDVLSITGRGTVATGRVERGTIKVGETVELVGLKDTRSTTITGLEMFQKSLDEALAGDNVGVLLRGIQKNDVERGMVLAKPRTINPHTKFDSQVYILTKEEGGRHTPFFEGYRPQFYVRTTDVTGKIESFRSDNDNPAQMVMPGDRIKMKVELIQPIAIEKGMRFAIREGGRTVGAGVVLSIIQ.

In terms of domain architecture, tr-type G spans 10 to 214 (KPHINIGTIG…QVDSYIPTPT (205 aa)). The tract at residues 19–26 (GHVDHGKT) is G1. 19–26 (GHVDHGKT) provides a ligand contact to GTP. Thr-26 lines the Mg(2+) pocket. Lys-57 is subject to N6-methyllysine. Positions 60–64 (GITIN) are G2. The segment at 81–84 (DCPG) is G3. GTP-binding positions include 81-85 (DCPGH) and 136-139 (NKED). Residues 136-139 (NKED) form a G4 region. The segment at 174-176 (SAL) is G5.

The protein belongs to the TRAFAC class translation factor GTPase superfamily. Classic translation factor GTPase family. EF-Tu/EF-1A subfamily.

It is found in the plastid. It localises to the chloroplast. It carries out the reaction GTP + H2O = GDP + phosphate + H(+). Its function is as follows. GTP hydrolase that promotes the GTP-dependent binding of aminoacyl-tRNA to the A-site of ribosomes during protein biosynthesis. The polypeptide is Elongation factor Tu, chloroplastic (tufA) (Euglena gracilis).